Consider the following 260-residue polypeptide: Crotonyl-CoA hydratase (260 aa).

E114 serves as the catalytic Nucleophile. The Proton acceptor role is filled by E134.

The protein belongs to the enoyl-CoA hydratase/isomerase family. In terms of assembly, homotetramer.

Its subcellular location is the cytoplasm. It catalyses the reaction 3-hydroxybutanoyl-CoA = (2E)-butenoyl-CoA + H2O. The catalysed reaction is a short-chain (3S)-3-hydroxyacyl-CoA = a short-chain (2E)-enoyl-CoA + H2O. Its pathway is lipid metabolism; butanoate metabolism. Its function is as follows. Involved in syntrophic growth of S.wolfei with butyrate, as part of the butyrate oxidation pathway. Probably catalyzes the hydration of crotonyl-CoA to 3-hydroxybutyryl-CoA. The chain is Crotonyl-CoA hydratase from Syntrophomonas wolfei subsp. wolfei (strain DSM 2245B / Goettingen).